Reading from the N-terminus, the 501-residue chain is Aminoaldehyde dehydrogenase ALDH10A8, chloroplastic (501 aa).

Residues D99 and L189 each coordinate Na(+). Residues 238-243 (GSFATG) and 238-245 (GSFATGSK) each bind NAD(+). E260 (proton acceptor) is an active-site residue. The NAD(+) site is built by C294 and E393. C294 functions as the Nucleophile in the catalytic mechanism.

The protein belongs to the aldehyde dehydrogenase family. As to quaternary structure, homodimer. Widely expressed.

The protein localises to the cytoplasm. It localises to the plastid. It is found in the chloroplast. The enzyme catalyses 4-aminobutanal + NAD(+) + H2O = 4-aminobutanoate + NADH + 2 H(+). The catalysed reaction is 3-aminopropanal + NAD(+) + H2O = beta-alanine + NADH + 2 H(+). It carries out the reaction 4-(trimethylamino)butanal + NAD(+) + H2O = 4-(trimethylamino)butanoate + NADH + 2 H(+). It catalyses the reaction 4-guanidinobutanal + NAD(+) + H2O = 4-guanidinobutanoate + NADH + 2 H(+). The enzyme catalyses betaine aldehyde + NAD(+) + H2O = glycine betaine + NADH + 2 H(+). The protein operates within amine and polyamine biosynthesis; betaine biosynthesis via choline pathway; betaine from betaine aldehyde: step 1/1. Functionally, dehydrogenase that catalyzes the oxidation of several aminoaldehydes. Metabolizes and detoxifies aldehyde products of polyamine degradation to non-toxic amino acids. Catalyzes the oxidation of 4-aminobutanal and 3-aminopropanal to 4-aminobutanoate and beta-alanine, respectively. Production of 4-aminobutinoate by ALDH10A8 may confer tolerance to salt stress. Catalyzes the oxidation of 4-(trimethylamino)butanal and 4-guanidinobutanal to 4-trimethylammoniobutanoate and 4-guanidinobutanoate, respectively. Involved in glycine betaine biosynthesis. Catalyzes with low efficiency the oxidation of betaine aldehyde to glycine betaine. The sequence is that of Aminoaldehyde dehydrogenase ALDH10A8, chloroplastic from Arabidopsis thaliana (Mouse-ear cress).